The chain runs to 93 residues: Late embryogenesis abundant protein B19.1A (93 aa).

Residues 1–93 (MASGQQERSQ…IDESKFKTKS (93 aa)) form a disordered region. Basic and acidic residues-rich tracts occupy residues 9-19 (SQLDRKAREGE) and 73-93 (GGERAAREGIDIDESKFKTKS).

It belongs to the small hydrophilic plant seed protein family. Embryos and young seedlings.

Functionally, lea proteins are late embryonic proteins abundant in higher plant seed embryos. It may have a role in desiccation tolerance by acting as an osmoprotective protein or as a desiccation-damage repair protein. This chain is Late embryogenesis abundant protein B19.1A (B19.1A), found in Hordeum vulgare (Barley).